A 235-amino-acid polypeptide reads, in one-letter code: Myelin protein zero-like protein 3 (235 aa).

An N-terminal signal peptide occupies residues 1–31 (MQQRGAAGSRGCALFPLLGVLFFQGVYIVFS). An Ig-like V-type domain is found at 32–148 (LEIRADAHVR…NIPMTELTVT (117 aa)). The Extracellular portion of the chain corresponds to 32 to 158 (LEIRADAHVR…ERGFGTMLSS (127 aa)). The cysteines at positions 52 and 128 are disulfide-linked. N123 is a glycosylation site (N-linked (GlcNAc...) asparagine). The helical transmembrane segment at 159–179 (VALLSILVFVPSAVVVALLLV) threads the bilayer. The Cytoplasmic portion of the chain corresponds to 180–235 (RMGRKAAGLKKRSRSGYKKSSIEVSDDTDQEEEEACMARLCVRCAECLDSDYEETY).

The protein belongs to the myelin P0 protein family.

It localises to the membrane. Functionally, mediates homophilic cell-cell adhesion. The polypeptide is Myelin protein zero-like protein 3 (MPZL3) (Homo sapiens (Human)).